The chain runs to 276 residues: MSKVPAALNPTEEDISLLLAAQTHIGTKNADKQMAPYIYKRRADGIHLLNIGKTWEKIVFAARILAAIENPADICVISGRQYGHRAVLKFAAQTGATAIAGRFTPGSFTNYITRSFKEPRVIVVTDPRVDHQAIREASYVNIPCISFVDSDSPLKFVDVAIPGNVRGRHSVGLLWWLLCRTVLRIKGGDLSVMPDMFFYRDPEEVEREAQEAAAAAQAAKETAEPTTEGAADVQADVPLAVAANLATETGNVDWSAEGAQDWAADGAAEQATSSWE.

Disordered regions lie at residues 209–233 (AQEA…AADV) and 252–276 (VDWS…SSWE). Over residues 211-231 (EAAAAAQAAKETAEPTTEGAA) the composition is skewed to low complexity.

The protein belongs to the universal ribosomal protein uS2 family. In terms of assembly, component of the small ribosomal subunit. Mature ribosomes consist of a small (40S) and a large (60S) subunit. The 40S subunit contains about 33 different proteins and 1 molecule of RNA (18S). The 60S subunit contains about 49 different proteins and 3 molecules of RNA (25S, 5.8S and 5S). Interacts with RPS21.

Its subcellular location is the cytoplasm. Its function is as follows. Required for the assembly and/or stability of the 40S ribosomal subunit. Required for the processing of the 20S rRNA-precursor to mature 18S rRNA in a late step of the maturation of 40S ribosomal subunits. The polypeptide is Small ribosomal subunit protein uS2 (Mycosarcoma maydis (Corn smut fungus)).